Reading from the N-terminus, the 101-residue chain is Small ribosomal subunit protein bS18c (101 aa).

This sequence belongs to the bacterial ribosomal protein bS18 family. In terms of assembly, part of the 30S ribosomal subunit.

Its subcellular location is the plastid. It localises to the chloroplast. This is Small ribosomal subunit protein bS18c from Aethionema cordifolium (Lebanon stonecress).